A 600-amino-acid chain; its full sequence is Probable translation initiation factor IF-2 (600 aa).

The tr-type G domain maps to 13–228 (LRTPIVAVLG…VLMGLAQRYM (216 aa)). Residues 22–29 (GHVDHGKT) form a G1 region. 22-29 (GHVDHGKT) provides a ligand contact to GTP. The tract at residues 47-51 (AITQH) is G2. The G3 stretch occupies residues 84-87 (DTPG). GTP-binding positions include 84–88 (DTPGH) and 138–141 (NKID). Positions 138–141 (NKID) are G4. The segment at 140–162 (IDTTPGWNPNPDAPVQGTYDDQS) is disordered. Residues 206–208 (SAE) are G5.

It belongs to the TRAFAC class translation factor GTPase superfamily. Classic translation factor GTPase family. IF-2 subfamily.

In terms of biological role, function in general translation initiation by promoting the binding of the formylmethionine-tRNA to ribosomes. Seems to function along with eIF-2. The polypeptide is Probable translation initiation factor IF-2 (Halobacterium salinarum (strain ATCC 700922 / JCM 11081 / NRC-1) (Halobacterium halobium)).